Reading from the N-terminus, the 270-residue chain is Aliphatic sulfonates import ATP-binding protein SsuB 3 (270 aa).

The 222-residue stretch at 17-238 (LAVRNLKKAF…VRGSHRLAAL (222 aa)) folds into the ABC transporter domain. An ATP-binding site is contributed by 49–56 (GRSGCGKS).

Belongs to the ABC transporter superfamily. Aliphatic sulfonates importer (TC 3.A.1.17.2) family. In terms of assembly, the complex is composed of two ATP-binding proteins (SsuB), two transmembrane proteins (SsuC) and a solute-binding protein (SsuA).

It is found in the cell inner membrane. The catalysed reaction is ATP + H2O + aliphatic sulfonate-[sulfonate-binding protein]Side 1 = ADP + phosphate + aliphatic sulfonateSide 2 + [sulfonate-binding protein]Side 1.. In terms of biological role, part of the ABC transporter complex SsuABC involved in aliphatic sulfonates import. Responsible for energy coupling to the transport system. The sequence is that of Aliphatic sulfonates import ATP-binding protein SsuB 3 from Pseudomonas savastanoi pv. phaseolicola (strain 1448A / Race 6) (Pseudomonas syringae pv. phaseolicola (strain 1448A / Race 6)).